Here is a 1068-residue protein sequence, read N- to C-terminus: Carbamoyl phosphate synthase large chain (1068 aa).

The segment at 1–401 (MPLNKDIKKV…AFLKGTRSLE (401 aa)) is carboxyphosphate synthetic domain. Arg129, Arg169, Gly175, Gly176, Lys208, Val210, Glu215, Gly241, Ile242, His243, Gln284, and Glu298 together coordinate ATP. Positions 133 to 327 (RNVMSRINGP…IAKVASKIAL (195 aa)) constitute an ATP-grasp 1 domain. Mg(2+)-binding residues include Gln284, Glu298, and Asn300. Mn(2+)-binding residues include Gln284, Glu298, and Asn300. Residues 402–549 (IGKYSLEHKK…YSTYDVYDEV (148 aa)) form an oligomerization domain region. The interval 550–932 (EVSKNKKVIV…ALYKGFIGAN (383 aa)) is carbamoyl phosphate synthetic domain. An ATP-grasp 2 domain is found at 674–864 (DELLEKLKIA…IVDIATRVML (191 aa)). Residues Arg710, Lys749, Leu751, Glu755, Gly780, Val781, His782, Ser783, Gln823, and Glu835 each coordinate ATP. Positions 823, 835, and 837 each coordinate Mg(2+). Gln823, Glu835, and Asn837 together coordinate Mn(2+). Positions 933–1068 (MSIKKEKGTV…ETLYIFDLSN (136 aa)) constitute an MGS-like domain. The interval 933 to 1068 (MSIKKEKGTV…ETLYIFDLSN (136 aa)) is allosteric domain.

Belongs to the CarB family. Composed of two chains; the small (or glutamine) chain promotes the hydrolysis of glutamine to ammonia, which is used by the large (or ammonia) chain to synthesize carbamoyl phosphate. Tetramer of heterodimers (alpha,beta)4. Requires Mg(2+) as cofactor. Mn(2+) is required as a cofactor.

It carries out the reaction hydrogencarbonate + L-glutamine + 2 ATP + H2O = carbamoyl phosphate + L-glutamate + 2 ADP + phosphate + 2 H(+). It catalyses the reaction hydrogencarbonate + NH4(+) + 2 ATP = carbamoyl phosphate + 2 ADP + phosphate + 2 H(+). It functions in the pathway amino-acid biosynthesis; L-arginine biosynthesis; carbamoyl phosphate from bicarbonate: step 1/1. Its pathway is pyrimidine metabolism; UMP biosynthesis via de novo pathway; (S)-dihydroorotate from bicarbonate: step 1/3. Its function is as follows. Large subunit of the glutamine-dependent carbamoyl phosphate synthetase (CPSase). CPSase catalyzes the formation of carbamoyl phosphate from the ammonia moiety of glutamine, carbonate, and phosphate donated by ATP, constituting the first step of 2 biosynthetic pathways, one leading to arginine and/or urea and the other to pyrimidine nucleotides. The large subunit (synthetase) binds the substrates ammonia (free or transferred from glutamine from the small subunit), hydrogencarbonate and ATP and carries out an ATP-coupled ligase reaction, activating hydrogencarbonate by forming carboxy phosphate which reacts with ammonia to form carbamoyl phosphate. In Clostridium botulinum (strain Kyoto / Type A2), this protein is Carbamoyl phosphate synthase large chain.